The sequence spans 158 residues: C-type lectin BiL (158 aa).

A signal peptide spans 1-23 (MGRFIFVSFGLLVVFLSLSGAKG). 4 cysteine pairs are disulfide-bonded: Cys26/Cys37, Cys54/Cys154, Cys61/Cys156, and Cys129/Cys146. Residues 33–155 (MNGLCYKIFD…CESKNAFLCQ (123 aa)) enclose the C-type lectin domain. Residues Gln119, Asp121, Glu127, Asn142, and Asp143 each coordinate Ca(2+). Residues 119-121 (QPD) carry the Galactose-binding motif.

Homodimer; disulfide-linked. In terms of tissue distribution, expressed by the venom gland.

It localises to the secreted. In terms of biological role, lectin with a hemagglutinating activity that is inhibited by galactose, lactose and EDTA. Is calcium-dependent. Shows effects on the renal function of isolated perfused rat kidneys by increasing both perfusion pressure (PP) and renal vascular resistance (RVR). In addition, the urinary flow and glomerular filtration rate (GFR) decreases significantly. The changes observed may reflect direct injury to the glomerular and tubular renal cells, and the rise in permeability in the glomerular endothelial cells, may be the effect of interactions of C-type lectin with endothelial cells or due to release of other mediators by mesangial, tubular and endothelial cells. This Bothrops insularis (Golden lancehead) protein is C-type lectin BiL.